A 327-amino-acid polypeptide reads, in one-letter code: GTP 3',8-cyclase (327 aa).

The region spanning 8-232 (AFARKFYYLR…LQRSRSDGPA (225 aa)) is the Radical SAM core domain. Arg-17 serves as a coordination point for GTP. 2 residues coordinate [4Fe-4S] cluster: Cys-24 and Cys-28. Tyr-30 is a binding site for S-adenosyl-L-methionine. Residue Cys-31 participates in [4Fe-4S] cluster binding. Arg-66 contacts GTP. S-adenosyl-L-methionine is bound at residue Gly-70. Thr-97 is a GTP binding site. Position 121 (Ser-121) interacts with S-adenosyl-L-methionine. A GTP-binding site is contributed by Lys-158. Met-192 is a binding site for S-adenosyl-L-methionine. [4Fe-4S] cluster-binding residues include Cys-255 and Cys-258. 260-262 (RLR) serves as a coordination point for GTP. Cys-272 contacts [4Fe-4S] cluster.

Belongs to the radical SAM superfamily. MoaA family. Monomer and homodimer. Requires [4Fe-4S] cluster as cofactor.

The enzyme catalyses GTP + AH2 + S-adenosyl-L-methionine = (8S)-3',8-cyclo-7,8-dihydroguanosine 5'-triphosphate + 5'-deoxyadenosine + L-methionine + A + H(+). Its pathway is cofactor biosynthesis; molybdopterin biosynthesis. Functionally, catalyzes the cyclization of GTP to (8S)-3',8-cyclo-7,8-dihydroguanosine 5'-triphosphate. This Photorhabdus laumondii subsp. laumondii (strain DSM 15139 / CIP 105565 / TT01) (Photorhabdus luminescens subsp. laumondii) protein is GTP 3',8-cyclase.